Here is a 760-residue protein sequence, read N- to C-terminus: ATP-dependent DNA helicase Hel308 (760 aa).

ATP-binding positions include Gln-28 and 46–53 (IPTASGKT). In terms of domain architecture, Helicase ATP-binding spans 33-199 (EMGLLEKKNL…WLGAALVLSE (167 aa)). The DEAH box motif lies at 144-147 (DEIH). In terms of domain architecture, Helicase C-terminal spans 232–426 (AVNLVLDTIK…SKLGTENALR (195 aa)).

It belongs to the helicase family. Hel308 subfamily. As to quaternary structure, monomer.

It carries out the reaction Couples ATP hydrolysis with the unwinding of duplex DNA by translocating in the 3'-5' direction.. The enzyme catalyses ATP + H2O = ADP + phosphate + H(+). Its function is as follows. DNA-dependent ATPase and 3'-5' DNA helicase that may be involved in repair of stalled replication forks. This is ATP-dependent DNA helicase Hel308 from Methanococcoides burtonii (strain DSM 6242 / NBRC 107633 / OCM 468 / ACE-M).